A 202-amino-acid chain; its full sequence is Large ribosomal subunit protein uL4 (202 aa).

Positions 45-71 (HAQKNRSEVSGSGKKPWRQKGTGRARV) are disordered.

This sequence belongs to the universal ribosomal protein uL4 family. As to quaternary structure, part of the 50S ribosomal subunit.

One of the primary rRNA binding proteins, this protein initially binds near the 5'-end of the 23S rRNA. It is important during the early stages of 50S assembly. It makes multiple contacts with different domains of the 23S rRNA in the assembled 50S subunit and ribosome. Functionally, forms part of the polypeptide exit tunnel. In Buchnera aphidicola subsp. Baizongia pistaciae (strain Bp), this protein is Large ribosomal subunit protein uL4.